A 555-amino-acid polypeptide reads, in one-letter code: Formate--tetrahydrofolate ligase (555 aa).

Position 64–71 (64–71 (TKAGIGKT)) interacts with ATP.

It belongs to the formate--tetrahydrofolate ligase family.

The enzyme catalyses (6S)-5,6,7,8-tetrahydrofolate + formate + ATP = (6R)-10-formyltetrahydrofolate + ADP + phosphate. It participates in one-carbon metabolism; tetrahydrofolate interconversion. The sequence is that of Formate--tetrahydrofolate ligase from Bacteroides thetaiotaomicron (strain ATCC 29148 / DSM 2079 / JCM 5827 / CCUG 10774 / NCTC 10582 / VPI-5482 / E50).